Consider the following 815-residue polypeptide: Lon protease 1 (815 aa).

One can recognise a Lon N-terminal domain in the interval 12-205 (VFVLALRDVV…HILKTIETEI (194 aa)). ATP is bound at residue 358–365 (GPPGVGKT). One can recognise a Lon proteolytic domain in the interval 594 to 775 (TNQIGQVAGL…DEVFKIALES (182 aa)). Active-site residues include serine 681 and lysine 724.

This sequence belongs to the peptidase S16 family. As to quaternary structure, homohexamer. Organized in a ring with a central cavity.

The protein resides in the cytoplasm. It catalyses the reaction Hydrolysis of proteins in presence of ATP.. ATP-dependent serine protease that mediates the selective degradation of mutant and abnormal proteins as well as certain short-lived regulatory proteins. Required for cellular homeostasis and for survival from DNA damage and developmental changes induced by stress. Degrades polypeptides processively to yield small peptide fragments that are 5 to 10 amino acids long. Binds to DNA in a double-stranded, site-specific manner. This Hydrogenovibrio crunogenus (strain DSM 25203 / XCL-2) (Thiomicrospira crunogena) protein is Lon protease 1.